Reading from the N-terminus, the 252-residue chain is uncharacterized protein (252 aa).

An NADP(+)-binding site is contributed by 9-33 (LITGGSAGIGLELAKRLLELGNEVI). Serine 139 contributes to the substrate binding site. Tyrosine 152 (proton acceptor) is an active-site residue.

This sequence belongs to the short-chain dehydrogenases/reductases (SDR) family.

It is found in the cytoplasm. This is an uncharacterized protein from Bacillus subtilis (strain 168).